The primary structure comprises 426 residues: L-ascorbate peroxidase T, chloroplastic (426 aa).

Histidine 112 functions as the Proton acceptor in the catalytic mechanism. Histidine 241 contributes to the heme b binding site. Threonine 242 provides a ligand contact to K(+). Residues 245-269 form a disordered region; sequence RARPDRSGWGKPETKYTKTGPGEAG. Residues 246-260 are compositionally biased toward basic and acidic residues; the sequence is ARPDRSGWGKPETKY. K(+)-binding residues include threonine 274 and aspartate 281. A helical membrane pass occupies residues 397 to 417; sequence YFLNIIIAIGVLVLLSTLFGG.

This sequence belongs to the peroxidase family. Ascorbate peroxidase subfamily. Requires heme b as cofactor.

The protein localises to the plastid. It is found in the chloroplast thylakoid membrane. It carries out the reaction L-ascorbate + H2O2 = L-dehydroascorbate + 2 H2O. Functionally, plays a key role in hydrogen peroxide removal. The protein is L-ascorbate peroxidase T, chloroplastic (APXT) of Arabidopsis thaliana (Mouse-ear cress).